The chain runs to 177 residues: uncharacterized protein (177 aa).

This is an uncharacterized protein from Schizosaccharomyces pombe (strain 972 / ATCC 24843) (Fission yeast).